The following is a 176-amino-acid chain: Inner membrane-spanning protein YciB (176 aa).

Transmembrane regions (helical) follow at residues 3–23 (FLFDLFPIILFFAAFKVWGIF), 24–44 (TATAVAIVATLAQVAWVAFRH), 49–69 (TMLWVSLGVIVVFGGATLVLH), 81–101 (LYWLFAIGLLAARYAFGNNLI), 121–141 (VAWALFFAVLGVANLYVVHNF), and 149–169 (FKLFGTTGAMVVFIILQSLWL).

It belongs to the YciB family.

It is found in the cell inner membrane. Functionally, plays a role in cell envelope biogenesis, maintenance of cell envelope integrity and membrane homeostasis. The sequence is that of Inner membrane-spanning protein YciB from Burkholderia lata (strain ATCC 17760 / DSM 23089 / LMG 22485 / NCIMB 9086 / R18194 / 383).